We begin with the raw amino-acid sequence, 363 residues long: 3-isopropylmalate dehydrogenase (363 aa).

79–92 (GPKWEHLPPNDQPE) serves as a coordination point for NAD(+). Substrate is bound by residues arginine 100, arginine 110, arginine 139, and aspartate 228. Mg(2+) contacts are provided by aspartate 228, aspartate 252, and aspartate 256. 286–298 (GSAPDIAGKNIAN) serves as a coordination point for NAD(+).

The protein belongs to the isocitrate and isopropylmalate dehydrogenases family. LeuB type 1 subfamily. In terms of assembly, homodimer. It depends on Mg(2+) as a cofactor. Mn(2+) is required as a cofactor.

It localises to the cytoplasm. It carries out the reaction (2R,3S)-3-isopropylmalate + NAD(+) = 4-methyl-2-oxopentanoate + CO2 + NADH. It functions in the pathway amino-acid biosynthesis; L-leucine biosynthesis; L-leucine from 3-methyl-2-oxobutanoate: step 3/4. Catalyzes the oxidation of 3-carboxy-2-hydroxy-4-methylpentanoate (3-isopropylmalate) to 3-carboxy-4-methyl-2-oxopentanoate. The product decarboxylates to 4-methyl-2 oxopentanoate. In Vibrio vulnificus (strain CMCP6), this protein is 3-isopropylmalate dehydrogenase.